Reading from the N-terminus, the 129-residue chain is UPF0102 protein Mrad2831_2938 (129 aa).

This sequence belongs to the UPF0102 family.

This chain is UPF0102 protein Mrad2831_2938, found in Methylobacterium radiotolerans (strain ATCC 27329 / DSM 1819 / JCM 2831 / NBRC 15690 / NCIMB 10815 / 0-1).